Reading from the N-terminus, the 61-residue chain is Small ribosomal subunit protein uS14 (61 aa).

Zn(2+) contacts are provided by Cys24, Cys27, Cys40, and Cys43.

Belongs to the universal ribosomal protein uS14 family. Zinc-binding uS14 subfamily. As to quaternary structure, part of the 30S ribosomal subunit. Contacts proteins S3 and S10. Requires Zn(2+) as cofactor.

In terms of biological role, binds 16S rRNA, required for the assembly of 30S particles and may also be responsible for determining the conformation of the 16S rRNA at the A site. This Rhodococcus erythropolis (strain PR4 / NBRC 100887) protein is Small ribosomal subunit protein uS14.